We begin with the raw amino-acid sequence, 96 residues long: Small ribosomal subunit protein bS6 (96 aa).

The protein belongs to the bacterial ribosomal protein bS6 family.

Functionally, binds together with bS18 to 16S ribosomal RNA. This is Small ribosomal subunit protein bS6 from Heliobacterium modesticaldum (strain ATCC 51547 / Ice1).